Consider the following 765-residue polypeptide: E3 ubiquitin-protein ligase SlrP (765 aa).

Positions 1-453 are interaction with target proteins; sequence MFNITNIQST…YQGPRVLFAM (453 aa). 10 LRR repeats span residues 200-219, 221-242, 243-262, 263-284, 285-305, 306-325, 326-346, 347-368, 369-389, and 390-410; these read QITT…ENLQ, NIKT…LPDT, IQEM…RLPS, ALQS…LPEE, LRYL…LPSE, ITHL…TLPP, GLKT…SLPP, ELQV…LPPT, ITTL…LPAA, and LQIM…LPHF. Residues 454 to 461 form a linker region; sequence GDFSIVRV. The E3 ubiquitin-protein ligase catalytic domain stretch occupies residues 462 to 765; it reads TRPLHQAVQG…VSSLMSAYWR (304 aa). Positions 464-758 constitute an NEL domain; sequence PLHQAVQGWL…NILLKKEVSS (295 aa). Residue Cys-546 is the Glycyl thioester intermediate of the active site.

The protein belongs to the LRR-containing bacterial E3 ligase family. As to quaternary structure, interacts with host TXN. Post-translationally, ubiquitinated in the presence of host E1 ubiquitin-activating enzyme, E2 ubiquitin-conjugating enzyme and ubiquitin.

Its subcellular location is the secreted. It is found in the host cytoplasm. It catalyses the reaction S-ubiquitinyl-[E2 ubiquitin-conjugating enzyme]-L-cysteine + [acceptor protein]-L-lysine = [E2 ubiquitin-conjugating enzyme]-L-cysteine + N(6)-ubiquitinyl-[acceptor protein]-L-lysine.. In terms of biological role, effector proteins function to alter host cell physiology and promote bacterial survival in host tissues. This protein is an E3 ubiquitin ligase that interferes with host's ubiquitination pathway. Can ubiquitinate both ubiquitin and host TXN (thioredoxin). Leads to significant decrease of thioredoxin activity and increase of host cell death. The polypeptide is E3 ubiquitin-protein ligase SlrP (slrP) (Salmonella typhimurium (strain 14028s / SGSC 2262)).